We begin with the raw amino-acid sequence, 903 residues long: Cell division cycle protein 48 homolog MJ1156 (903 aa).

ATP-binding positions include 220 to 227 and 493 to 500; these read GPPGTGKT.

It belongs to the AAA ATPase family. CDC48 subfamily.

This is Cell division cycle protein 48 homolog MJ1156 from Methanocaldococcus jannaschii (strain ATCC 43067 / DSM 2661 / JAL-1 / JCM 10045 / NBRC 100440) (Methanococcus jannaschii).